Consider the following 129-residue polypeptide: Follitropin subunit beta (129 aa).

An N-terminal signal peptide occupies residues 1 to 20 (MKTAQFYIFFFCWKAIWCNG). Intrachain disulfides connect C21–C69, C35–C84, C38–C122, C46–C100, C50–C102, and C105–C112. N-linked (GlcNAc...) asparagine glycans are attached at residues N25 and N42.

The protein belongs to the glycoprotein hormones subunit beta family. In terms of assembly, heterodimer. The active follitropin is a heterodimer composed of an alpha chain/CGA shared with other hormones and a unique beta chain/FSHB shown here.

It is found in the secreted. Its function is as follows. Together with the alpha chain CGA constitutes follitropin, the follicle-stimulating hormone, and provides its biological specificity to the hormone heterodimer. Binds FSHR, a G protein-coupled receptor, on target cells to activate downstream signaling pathways. Follitropin is involved in follicle development and spermatogenesis in reproductive organs. This is Follitropin subunit beta (FSHB) from Monodelphis domestica (Gray short-tailed opossum).